The primary structure comprises 479 residues: MKKPEKITSRTADFAKWYVDVITQADLMNYGPIKGTIYFKPLGYKIWENIVKIVNAYFVKQKIENVYFPLLIPQDFIEKEKKHIEGFAPELLTITKVGDKNLVENIYIRPTSELLFADYFKAEIAKNNILPIKLNQWSQVLRWEKTTNPFLRNTEFLWQEGHTIHASKVEANQFAKKIARFYKYFLENYLAIPVISGQKTEREKFAGAVNTYTVEAMMQNFRALQSATAHFLGQNFAKNFEIFYKNKENKSQIPFQTSWGLSTRLIGAIVMVHSDDNGLIFPPKIAPIQVDILEFFSKKNQEVKIFAKRIAKILKNAKIAYKIDDTDQQIGYKINNSEVHGAPIRIEIGPNEVKNNQICLVRRDNHQKFFFNIDLLKEKCRKILEQIQADLFKKAKIRLLENTVFVNSINEFEQAIKNNKFVIAPFSESPEREQEIQEKTGATARCILPKNSFFALPQAGNSIFSGEKTNKFVLFAKSY.

Belongs to the class-II aminoacyl-tRNA synthetase family. ProS type 3 subfamily. As to quaternary structure, homodimer.

It localises to the cytoplasm. It carries out the reaction tRNA(Pro) + L-proline + ATP = L-prolyl-tRNA(Pro) + AMP + diphosphate. Catalyzes the attachment of proline to tRNA(Pro) in a two-step reaction: proline is first activated by ATP to form Pro-AMP and then transferred to the acceptor end of tRNA(Pro). This chain is Proline--tRNA ligase, found in Mesomycoplasma hyopneumoniae (strain 7448) (Mycoplasma hyopneumoniae).